Here is a 190-residue protein sequence, read N- to C-terminus: uncharacterized protein (190 aa).

To E.coli YdjR.

This is an uncharacterized protein from Pseudomonas putida (Arthrobacter siderocapsulatus).